Reading from the N-terminus, the 659-residue chain is Cysteine-rich receptor-like protein kinase 18 (659 aa).

The signal sequence occupies residues 1-27; sequence MATKSCELVLCFFVFFVISFSAISVSA. Gnk2-homologous domains lie at 28–131 and 137–250; these read QTCD…NRPF and MDPL…VYPF. The Extracellular segment spans residues 28 to 287; that stretch reads QTCDNTTGTF…KNDSRISGGK (260 aa). N32, N57, N152, N162, N179, N180, N197, N275, and N279 each carry an N-linked (GlcNAc...) asparagine glycan. A helical transmembrane segment spans residues 288–308; sequence IAAIVVVTVVTIILVVLGFVI. Topologically, residues 309 to 659 are cytoplasmic; sequence SNRRKQKQEM…EATITDVNPR (351 aa). In terms of domain architecture, Protein kinase spans 339–611; that stretch reads FSERNKLGKG…PTMSTIHQML (273 aa). Residues 345–353 and K367 each bind ATP; that span reads LGKGGFGEV. Phosphotyrosine is present on Y412. D464 serves as the catalytic Proton acceptor. Phosphoserine is present on S468. T504 carries the phosphothreonine modification. Phosphotyrosine is present on Y512.

The protein belongs to the protein kinase superfamily. Ser/Thr protein kinase family. CRK subfamily.

It is found in the membrane. It catalyses the reaction L-seryl-[protein] + ATP = O-phospho-L-seryl-[protein] + ADP + H(+). The enzyme catalyses L-threonyl-[protein] + ATP = O-phospho-L-threonyl-[protein] + ADP + H(+). This Arabidopsis thaliana (Mouse-ear cress) protein is Cysteine-rich receptor-like protein kinase 18 (CRK18).